A 260-amino-acid chain; its full sequence is MMWSNFFMQEEDRRRTAVGRRRAQEQQNLGLTPEREGKIKLGLLVAIVGATLAVLAVGTEFWVELNTYKTNGSAVCEAAHLGLWKVCIKRLWQADVPAGRETCGPAELPGEANCTYFKFFTTGENAHIFQRTTKKEVNLAAAVIAVLGLTAMALGCLCVIMVLSKGAEFLLRLGAVCFGLSGLLLFVSLEVFRHSVRALLQGVNPETPPAPRLAYEYSWSLGCGVGAGLILLLGGVCFLLLTLPSWPWRSLCPKRGGPTA.

A run of 4 helical transmembrane segments spans residues 43 to 63 (LLVAIVGATLAVLAVGTEFWV), 143 to 163 (VIAVLGLTAMALGCLCVIMVL), 169 to 189 (FLLRLGAVCFGLSGLLLFVSL), and 221 to 241 (LGCGVGAGLILLLGGVCFLLL).

This sequence belongs to the PMP-22/EMP/MP20 family. CACNG subfamily. Interacts with CACNA1C. Identified in a complex with the L-type calcium channel subunits CACNA1C, CACNA2D1 and either CACNB1 or CACNB2. In terms of tissue distribution, detected in heart atrium and ventricle, aorta and skeletal muscle. Detected in heart left ventricle.

The protein resides in the cell membrane. Its function is as follows. Regulates the activity of L-type calcium channels that contain CACNA1C as pore-forming subunit. This chain is Voltage-dependent calcium channel gamma-6 subunit (Cacng6), found in Rattus norvegicus (Rat).